Consider the following 116-residue polypeptide: Large ribosomal subunit protein bL20 (116 aa).

Belongs to the bacterial ribosomal protein bL20 family.

Functionally, binds directly to 23S ribosomal RNA and is necessary for the in vitro assembly process of the 50S ribosomal subunit. It is not involved in the protein synthesizing functions of that subunit. The protein is Large ribosomal subunit protein bL20 of Desulfatibacillum aliphaticivorans.